A 116-amino-acid chain; its full sequence is Immunoglobulin heavy variable 3-66 (116 aa).

The first 19 residues, 1–19 (MEFGLSWVFLVAILKGVQC), serve as a signal peptide directing secretion. The framework-1 stretch occupies residues 20 to 44 (EVQLVESGGGLIQPGGSLRLSCAAS). Residues 20-116 (EVQLVESGGG…EDTAVYYCAR (97 aa)) form the Ig-like domain. Cysteine 41 and cysteine 114 form a disulfide bridge. The complementarity-determining-1 stretch occupies residues 45–52 (GFTVSSNY). The framework-2 stretch occupies residues 53–69 (MSWVRQAPGKGLEWVSV). Residues 70–76 (IYSCGST) are complementarity-determining-2. The segment at 77 to 114 (YYADSVKGRFTISRDNSKNTLYLQMNSLRAEDTAVYYC) is framework-3. A complementarity-determining-3 region spans residues 115–116 (AR).

Immunoglobulins are composed of two identical heavy chains and two identical light chains; disulfide-linked.

Its subcellular location is the secreted. It localises to the cell membrane. Its function is as follows. V region of the variable domain of immunoglobulin heavy chains that participates in the antigen recognition. Immunoglobulins, also known as antibodies, are membrane-bound or secreted glycoproteins produced by B lymphocytes. In the recognition phase of humoral immunity, the membrane-bound immunoglobulins serve as receptors which, upon binding of a specific antigen, trigger the clonal expansion and differentiation of B lymphocytes into immunoglobulins-secreting plasma cells. Secreted immunoglobulins mediate the effector phase of humoral immunity, which results in the elimination of bound antigens. The antigen binding site is formed by the variable domain of one heavy chain, together with that of its associated light chain. Thus, each immunoglobulin has two antigen binding sites with remarkable affinity for a particular antigen. The variable domains are assembled by a process called V-(D)-J rearrangement and can then be subjected to somatic hypermutations which, after exposure to antigen and selection, allow affinity maturation for a particular antigen. In Homo sapiens (Human), this protein is Immunoglobulin heavy variable 3-66.